The following is a 302-amino-acid chain: Rhomboid-related protein 2 (302 aa).

The tract at residues 1-38 is disordered; the sequence is MAVAHEMEMESVNLNMEREGKEEPEEEKMKGNGEGKDF. Basic and acidic residues predominate over residues 16-38; it reads MEREGKEEPEEEKMKGNGEGKDF. The next 7 helical transmembrane spans lie at 71-91, 127-147, 158-178, 182-202, 211-231, 244-264, and 277-297; these read PLFI…YAVW, LVHA…VLGI, VGLV…IFDP, LVGA…NVIV, FGIV…GFAL, VSFA…YTVF, and FWIA…FNIF. The active-site Nucleophile is the Ser186. The active site involves His249.

The protein belongs to the peptidase S54 family. Proteolytic processing of the proenzyme produces an N- and a C-terminal fragment. The processing is required for activation of the protease.

Its subcellular location is the cell membrane. The catalysed reaction is Cleaves type-1 transmembrane domains using a catalytic dyad composed of serine and histidine that are contributed by different transmembrane domains.. Involved in regulated intramembrane proteolysis and the subsequent release of functional polypeptides from their membrane anchors. Known substrate: EFNB3. This chain is Rhomboid-related protein 2 (Rhbdl2), found in Mus musculus (Mouse).